A 250-amino-acid polypeptide reads, in one-letter code: 4-hydroxy-tetrahydrodipicolinate reductase (250 aa).

Residues 10–15, 78–80, and 105–108 each bind NAD(+); these read GARGRI, GTT, and APNF. His-135 serves as the catalytic Proton donor/acceptor. His-136 serves as a coordination point for (S)-2,3,4,5-tetrahydrodipicolinate. The Proton donor role is filled by Lys-139. Residue 145-146 participates in (S)-2,3,4,5-tetrahydrodipicolinate binding; that stretch reads GT. The disordered stretch occupies residues 158–177; it reads RAEAGSAPQPDATTTALDGA.

The protein belongs to the DapB family.

It localises to the cytoplasm. It catalyses the reaction (S)-2,3,4,5-tetrahydrodipicolinate + NAD(+) + H2O = (2S,4S)-4-hydroxy-2,3,4,5-tetrahydrodipicolinate + NADH + H(+). It carries out the reaction (S)-2,3,4,5-tetrahydrodipicolinate + NADP(+) + H2O = (2S,4S)-4-hydroxy-2,3,4,5-tetrahydrodipicolinate + NADPH + H(+). The protein operates within amino-acid biosynthesis; L-lysine biosynthesis via DAP pathway; (S)-tetrahydrodipicolinate from L-aspartate: step 4/4. Its function is as follows. Catalyzes the conversion of 4-hydroxy-tetrahydrodipicolinate (HTPA) to tetrahydrodipicolinate. This Streptomyces griseus subsp. griseus (strain JCM 4626 / CBS 651.72 / NBRC 13350 / KCC S-0626 / ISP 5235) protein is 4-hydroxy-tetrahydrodipicolinate reductase.